The primary structure comprises 643 residues: Pseudouridylate synthase PUS7L (643 aa).

D284 functions as the Nucleophile in the catalytic mechanism. Positions 370–597 constitute a TRUD domain; it reads GFVNYYGPQR…PGCYRPLLAK (228 aa).

The protein belongs to the pseudouridine synthase TruD family.

It catalyses the reaction a uridine in mRNA = a pseudouridine in mRNA. In terms of biological role, pseudouridine synthase that catalyzes pseudouridylation of mRNAs. The polypeptide is Pseudouridylate synthase PUS7L (pus7l) (Danio rerio (Zebrafish)).